The chain runs to 335 residues: Acetyl-coenzyme A carboxylase carboxyl transferase subunit alpha (335 aa).

Residues Thr-48–Ala-308 enclose the CoA carboxyltransferase C-terminal domain.

This sequence belongs to the AccA family. As to quaternary structure, acetyl-CoA carboxylase is a heterohexamer composed of biotin carboxyl carrier protein (AccB), biotin carboxylase (AccC) and two subunits each of ACCase subunit alpha (AccA) and ACCase subunit beta (AccD).

The protein localises to the cytoplasm. It catalyses the reaction N(6)-carboxybiotinyl-L-lysyl-[protein] + acetyl-CoA = N(6)-biotinyl-L-lysyl-[protein] + malonyl-CoA. Its pathway is lipid metabolism; malonyl-CoA biosynthesis; malonyl-CoA from acetyl-CoA: step 1/1. Component of the acetyl coenzyme A carboxylase (ACC) complex. First, biotin carboxylase catalyzes the carboxylation of biotin on its carrier protein (BCCP) and then the CO(2) group is transferred by the carboxyltransferase to acetyl-CoA to form malonyl-CoA. In Chlorobium luteolum (strain DSM 273 / BCRC 81028 / 2530) (Pelodictyon luteolum), this protein is Acetyl-coenzyme A carboxylase carboxyl transferase subunit alpha.